The sequence spans 421 residues: MTDAEIENSPASDLKELNLENEGVEQQDQAKADESDPVESKKKKNKKKKKKKSNVKKIELLFPDGKYPEGAWMDYHQDFNLQRTTDEESRYLKRDLERAEHWNDVRKGAEIHRRVRRAIKDRIVPGMKLMDIADMIENTTRKYTGAENLLAMEDPKSQGIGFPTGLSLNHCAAHFTPNAGDKTVLKYEDVMKVDYGVQVNGNIIDSAFTVSFDPQYDNLLAAVKDATYTGIKEAGIDVRLTDIGEAIQEVMESYEVEINGETYQVKPCRNLCGHSIAPYRIHGGKSVPIVKNGDTTKMEEGEHFAIETFGSTGRGYVTAGGEVSHYARSAEDHQVMPTLDSAKNLLKTIDRNFGTLPFCRRYLDRLGQEKYLFALNNLVRHGLVQDYPPLNDIPGSYTAQFEHTILLHAHKKEVVSKGDDY.

Residues 1–53 (MTDAEIENSPASDLKELNLENEGVEQQDQAKADESDPVESKKKKNKKKKKKKS) are disordered. Over residues 28 to 40 (DQAKADESDPVES) the composition is skewed to basic and acidic residues. Serine 35 carries the post-translational modification Phosphoserine. Positions 41–53 (KKKKNKKKKKKKS) are enriched in basic residues. Position 174 (histidine 174) interacts with substrate. A divalent metal cation contacts are provided by aspartate 194, aspartate 205, and histidine 274. Substrate is bound at residue histidine 282. Residues glutamate 307 and glutamate 402 each contribute to the a divalent metal cation site.

It belongs to the peptidase M24A family. Methionine aminopeptidase eukaryotic type 2 subfamily. It depends on Co(2+) as a cofactor. The cofactor is Zn(2+). Requires Mn(2+) as cofactor. Fe(2+) is required as a cofactor.

It localises to the cytoplasm. It catalyses the reaction Release of N-terminal amino acids, preferentially methionine, from peptides and arylamides.. Cotranslationally removes the N-terminal methionine from nascent proteins. The N-terminal methionine is often cleaved when the second residue in the primary sequence is small and uncharged (Met-Ala-, Cys, Gly, Pro, Ser, Thr, or Val). In Saccharomyces cerevisiae (strain RM11-1a) (Baker's yeast), this protein is Methionine aminopeptidase 2.